The sequence spans 264 residues: 3-methyl-2-oxobutanoate hydroxymethyltransferase (264 aa).

Mg(2+) contacts are provided by Asp45 and Asp84. 3-methyl-2-oxobutanoate-binding positions include 45 to 46 (DS), Asp84, and Lys112. Position 114 (Glu114) interacts with Mg(2+). Glu181 functions as the Proton acceptor in the catalytic mechanism.

It belongs to the PanB family. As to quaternary structure, homodecamer; pentamer of dimers. Mg(2+) serves as cofactor.

It is found in the cytoplasm. The enzyme catalyses 3-methyl-2-oxobutanoate + (6R)-5,10-methylene-5,6,7,8-tetrahydrofolate + H2O = 2-dehydropantoate + (6S)-5,6,7,8-tetrahydrofolate. It functions in the pathway cofactor biosynthesis; (R)-pantothenate biosynthesis; (R)-pantoate from 3-methyl-2-oxobutanoate: step 1/2. In terms of biological role, catalyzes the reversible reaction in which hydroxymethyl group from 5,10-methylenetetrahydrofolate is transferred onto alpha-ketoisovalerate to form ketopantoate. This is 3-methyl-2-oxobutanoate hydroxymethyltransferase from Shewanella sp. (strain MR-7).